Here is a 268-residue protein sequence, read N- to C-terminus: Satratoxin biosynthesis SC1 cluster protein 4 (268 aa).

4 helical membrane-spanning segments follow: residues 34–54 (VWLV…VHIF), 78–98 (LFAI…GLAI), 113–133 (HLAG…IKIV), and 145–165 (AVIW…APIY).

Belongs to the SAT4 family.

The protein resides in the membrane. Its pathway is mycotoxin biosynthesis. Functionally, part of the satratoxin SC1 cluster involved in the biosynthesis of satratoxins, trichothecene mycotoxins that are associated with human food poisonings. Satratoxins are suggested to be made by products of multiple gene clusters (SC1, SC2 and SC3) that encode 21 proteins in all, including polyketide synthases, acetyltransferases, and other enzymes expected to modify the trichothecene skeleton. SC1 encodes 10 proteins, SAT1 to SAT10. The largest are SAT8, which encodes a putative polyketide synthase (PKS) with a conventional non-reducing architecture, and SAT10, a putative protein containing four ankyrin repeats and thus may be involved in protein scaffolding. The putative short-chain reductase SAT3 may assist the PKS in some capacity. SAT6 contains a secretory lipase domain and acts probably as a trichothecene esterase. SAT5 encodes a putative acetyltransferase, and so, with SAT6, may affect endogenous protection from toxicity. The probable transcription factor SAT9 may regulate the expression of the SC1 cluster. SC2 encodes proteins SAT11 to SAT16, the largest of which encodes the putative reducing PKS SAT13. SAT11 is a cytochrome P450 monooxygenase, while SAT14 and SAT16 are probable acetyltransferases. The SC2 cluster may be regulated by the transcription factor SAT15. SC3 is a small cluster that encodes 5 proteins, SAT17 to SAT21. SAT21 is a putative MFS-type transporter which may have a role in exporting secondary metabolites. The four other proteins putatively encoded in SC3 include the taurine hydroxylase-like protein SAT17, the O-methyltransferase SAT18, the acetyltransferase SAT19, and the Cys6-type zinc finger SAT20, the latter being probably involved in regulation of SC3 expression. The polypeptide is Satratoxin biosynthesis SC1 cluster protein 4 (Stachybotrys chartarum (strain CBS 109288 / IBT 7711) (Toxic black mold)).